Consider the following 38-residue polypeptide: Large ribosomal subunit protein bL36 (38 aa).

It belongs to the bacterial ribosomal protein bL36 family.

The sequence is that of Large ribosomal subunit protein bL36 from Baumannia cicadellinicola subsp. Homalodisca coagulata.